A 250-amino-acid chain; its full sequence is NAD(P)H-quinone oxidoreductase subunit K (250 aa).

Residues cysteine 60, cysteine 61, cysteine 125, and cysteine 156 each contribute to the [4Fe-4S] cluster site. Residues 230-250 are disordered; that stretch reads ELNTSEIDASPASQPSSTYES. A compositionally biased stretch (polar residues) spans 231–250; it reads LNTSEIDASPASQPSSTYES.

It belongs to the complex I 20 kDa subunit family. In terms of assembly, NDH-1 can be composed of about 15 different subunits; different subcomplexes with different compositions have been identified which probably have different functions. [4Fe-4S] cluster is required as a cofactor.

It localises to the cellular thylakoid membrane. The enzyme catalyses a plastoquinone + NADH + (n+1) H(+)(in) = a plastoquinol + NAD(+) + n H(+)(out). It catalyses the reaction a plastoquinone + NADPH + (n+1) H(+)(in) = a plastoquinol + NADP(+) + n H(+)(out). Its function is as follows. NDH-1 shuttles electrons from an unknown electron donor, via FMN and iron-sulfur (Fe-S) centers, to quinones in the respiratory and/or the photosynthetic chain. The immediate electron acceptor for the enzyme in this species is believed to be plastoquinone. Couples the redox reaction to proton translocation, and thus conserves the redox energy in a proton gradient. Cyanobacterial NDH-1 also plays a role in inorganic carbon-concentration. In Prochlorococcus marinus (strain MIT 9303), this protein is NAD(P)H-quinone oxidoreductase subunit K.